The sequence spans 56 residues: Small ribosomal subunit protein uS14 (56 aa).

Zn(2+) is bound by residues Cys21, Cys24, Cys39, and Cys42.

This sequence belongs to the universal ribosomal protein uS14 family. Zinc-binding uS14 subfamily. Part of the 30S ribosomal subunit. Zn(2+) is required as a cofactor.

Functionally, binds 16S rRNA, required for the assembly of 30S particles. The chain is Small ribosomal subunit protein uS14 from Methanospirillum hungatei JF-1 (strain ATCC 27890 / DSM 864 / NBRC 100397 / JF-1).